A 207-amino-acid polypeptide reads, in one-letter code: Holliday junction branch migration complex subunit RuvA (207 aa).

Positions methionine 1 to serine 65 are domain I. Residues serine 66–isoleucine 144 are domain II. Residues alanine 145–methionine 155 are flexible linker. Positions methionine 155–serine 207 are domain III.

This sequence belongs to the RuvA family. As to quaternary structure, homotetramer. Forms an RuvA(8)-RuvB(12)-Holliday junction (HJ) complex. HJ DNA is sandwiched between 2 RuvA tetramers; dsDNA enters through RuvA and exits via RuvB. An RuvB hexamer assembles on each DNA strand where it exits the tetramer. Each RuvB hexamer is contacted by two RuvA subunits (via domain III) on 2 adjacent RuvB subunits; this complex drives branch migration. In the full resolvosome a probable DNA-RuvA(4)-RuvB(12)-RuvC(2) complex forms which resolves the HJ.

The protein localises to the cytoplasm. Its function is as follows. The RuvA-RuvB-RuvC complex processes Holliday junction (HJ) DNA during genetic recombination and DNA repair, while the RuvA-RuvB complex plays an important role in the rescue of blocked DNA replication forks via replication fork reversal (RFR). RuvA specifically binds to HJ cruciform DNA, conferring on it an open structure. The RuvB hexamer acts as an ATP-dependent pump, pulling dsDNA into and through the RuvAB complex. HJ branch migration allows RuvC to scan DNA until it finds its consensus sequence, where it cleaves and resolves the cruciform DNA. This is Holliday junction branch migration complex subunit RuvA from Chlamydia caviae (strain ATCC VR-813 / DSM 19441 / 03DC25 / GPIC) (Chlamydophila caviae).